A 390-amino-acid polypeptide reads, in one-letter code: Queuine tRNA-ribosyltransferase (390 aa).

D92 (proton acceptor) is an active-site residue. Substrate-binding positions include 92–96 (DSGGF), D146, Q195, and G222. The segment at 253–259 (GVGTPED) is RNA binding. Catalysis depends on D272, which acts as the Nucleophile. Residues 277–281 (TRNAR) form an RNA binding; important for wobble base 34 recognition region. The Zn(2+) site is built by C310, C312, C315, and H354.

It belongs to the queuine tRNA-ribosyltransferase family. In terms of assembly, homodimer. Within each dimer, one monomer is responsible for RNA recognition and catalysis, while the other monomer binds to the replacement base PreQ1. Requires Zn(2+) as cofactor.

It catalyses the reaction 7-aminomethyl-7-carbaguanine + guanosine(34) in tRNA = 7-aminomethyl-7-carbaguanosine(34) in tRNA + guanine. It functions in the pathway tRNA modification; tRNA-queuosine biosynthesis. In terms of biological role, catalyzes the base-exchange of a guanine (G) residue with the queuine precursor 7-aminomethyl-7-deazaguanine (PreQ1) at position 34 (anticodon wobble position) in tRNAs with GU(N) anticodons (tRNA-Asp, -Asn, -His and -Tyr). Catalysis occurs through a double-displacement mechanism. The nucleophile active site attacks the C1' of nucleotide 34 to detach the guanine base from the RNA, forming a covalent enzyme-RNA intermediate. The proton acceptor active site deprotonates the incoming PreQ1, allowing a nucleophilic attack on the C1' of the ribose to form the product. After dissociation, two additional enzymatic reactions on the tRNA convert PreQ1 to queuine (Q), resulting in the hypermodified nucleoside queuosine (7-(((4,5-cis-dihydroxy-2-cyclopenten-1-yl)amino)methyl)-7-deazaguanosine). The polypeptide is Queuine tRNA-ribosyltransferase (Acidovorax ebreus (strain TPSY) (Diaphorobacter sp. (strain TPSY))).